Here is a 255-residue protein sequence, read N- to C-terminus: MARSVVLVDCHWHLTASEFDHDIGSVLEDAKTIGLCALVAVAEHSGEFEKVIELSRRNAGLVFPCLGVHPVQGSATGPQRSATLQDVEDALPMIEQYRDELVAIGEVGLDFTPRIACTDDQKEEQRNVHSRSAGRPTINLLRDQGAEKVLLHAFDGKPSVAMEGVKAGFYFSIPPSIIRSEQQKLVKQLPLENMCLETDSPALGPEKQVRNEPKNILHSAEYIARVKGISLEEVIEITTKNALKVFPRLCHVLPK.

The Zn(2+) site is built by His11, His13, Glu106, His129, His152, and Asp199.

It belongs to the metallo-dependent hydrolases superfamily. TatD-type hydrolase family. The cofactor is Mn(2+). Requires Ca(2+) as cofactor. Mg(2+) is required as a cofactor. Zn(2+) serves as cofactor.

Its subcellular location is the nucleus. With respect to regulation, the 3'-exonuclease activity is sensitive to the metal ion present in the active site, whereas the AP endodeoxyribonuclease activity is observed in a variety of divalent metal cofactors. 3'-exoxonuclease activity is suppressed in the presence of Ca(2+), Zn(2+) and Ni(2+). Its function is as follows. Exhibits 3'-exonuclease activities and apurinic/apyrimidinic (AP) endonuclease (in vitro). Show preferential AP endonuclease activity on double-stranded DNA substrates and 3'- exonuclease activity on single-stranded DNA. The sequence is that of Putative deoxyribonuclease tatdn3-B (tatdn3-b) from Xenopus laevis (African clawed frog).